Here is a 269-residue protein sequence, read N- to C-terminus: Phosphonoacetaldehyde hydrolase (269 aa).

The active-site Nucleophile is aspartate 10. Mg(2+) contacts are provided by aspartate 10 and alanine 12. The active-site Schiff-base intermediate with substrate is the lysine 52. Position 186 (aspartate 186) interacts with Mg(2+).

It belongs to the HAD-like hydrolase superfamily. PhnX family. As to quaternary structure, homodimer. The cofactor is Mg(2+).

The catalysed reaction is phosphonoacetaldehyde + H2O = acetaldehyde + phosphate + H(+). In terms of biological role, involved in phosphonate degradation. This Salmonella paratyphi A (strain ATCC 9150 / SARB42) protein is Phosphonoacetaldehyde hydrolase.